The sequence spans 157 residues: MNAQKGFTLIELMIVIAIIGILAAIALPAYQDYISKSQTTRVVGELAAGKTAVDAALFEGKTPKLGKAANDTEEDIGLTTTGGTARSNLMSSVNIGGGAFATGAGTLEATLGNRANKDIAGAVITQSRDAEGVWTCTINGSAAPGWKSKFVPTGCKE.

The propeptide occupies 1-6; sequence MNAQKG. Phe7 carries the post-translational modification N-methylphenylalanine. A disulfide bond links Cys136 and Cys155.

The protein belongs to the N-Me-Phe pilin family. As to quaternary structure, the pili are polar flexible filaments of about 5.4 nanometers diameter and 2.5 micrometers average length; they consist of only a single polypeptide chain arranged in a helical configuration of five subunits per turn in the assembled pilus.

It localises to the fimbrium. This is Fimbrial protein Q (tfpQ) from Moraxella bovis.